The primary structure comprises 689 residues: DNA topoisomerase 1 (689 aa).

The Toprim domain maps to 3 to 113 (DNLVIVESPA…KENRVVFNEI (111 aa)). Mg(2+) is bound by residues Glu9 and Asp82. In terms of domain architecture, Topo IA-type catalytic spans 129–557 (EMDLVDAQQA…FYNSFKQDVE (429 aa)). Positions 163–168 (SAGRVQ) are interaction with DNA. Tyr298 acts as the O-(5'-phospho-DNA)-tyrosine intermediate in catalysis. 3 C4-type zinc fingers span residues 577 to 603 (CEVCGSPMVIKMGRYGKFMACSNFPDC), 617 to 645 (CPKCNEGDVVERKSKKNRIFYGCSRYPEC), and 658 to 681 (CPKCHHYLVNKKKGKSSQVVCSNC).

The protein belongs to the type IA topoisomerase family. Monomer. Requires Mg(2+) as cofactor.

The catalysed reaction is ATP-independent breakage of single-stranded DNA, followed by passage and rejoining.. Functionally, releases the supercoiling and torsional tension of DNA, which is introduced during the DNA replication and transcription, by transiently cleaving and rejoining one strand of the DNA duplex. Introduces a single-strand break via transesterification at a target site in duplex DNA. The scissile phosphodiester is attacked by the catalytic tyrosine of the enzyme, resulting in the formation of a DNA-(5'-phosphotyrosyl)-enzyme intermediate and the expulsion of a 3'-OH DNA strand. The free DNA strand then undergoes passage around the unbroken strand, thus removing DNA supercoils. Finally, in the religation step, the DNA 3'-OH attacks the covalent intermediate to expel the active-site tyrosine and restore the DNA phosphodiester backbone. This Staphylococcus epidermidis (strain ATCC 35984 / DSM 28319 / BCRC 17069 / CCUG 31568 / BM 3577 / RP62A) protein is DNA topoisomerase 1.